The following is a 122-amino-acid chain: Large ribosomal subunit protein bL12 (122 aa).

The protein belongs to the bacterial ribosomal protein bL12 family. As to quaternary structure, homodimer. Part of the ribosomal stalk of the 50S ribosomal subunit. Forms a multimeric L10(L12)X complex, where L10 forms an elongated spine to which 2 to 4 L12 dimers bind in a sequential fashion. Binds GTP-bound translation factors.

In terms of biological role, forms part of the ribosomal stalk which helps the ribosome interact with GTP-bound translation factors. Is thus essential for accurate translation. The chain is Large ribosomal subunit protein bL12 from Glaesserella parasuis serovar 5 (strain SH0165) (Haemophilus parasuis).